The chain runs to 515 residues: SWI/SNF global transcription activator complex subunit snf59 (515 aa).

Positions 1–226 (MEEEDITLEH…IHHVDSKNEE (226 aa)) are disordered. Composition is skewed to basic and acidic residues over residues 7–37 (TLEH…DNSN), 50–59 (EEPKYHDNSN), 73–85 (EPEH…KEST), 94–103 (EEPKHHDNSN), and 116–125 (EEPKHHDSSN). Residues 126–136 (KESTNLDNSNM) are compositionally biased toward polar residues. Residues 140-226 (ENQKNFKIEE…IHHVDSKNEE (87 aa)) show a composition bias toward basic and acidic residues.

The protein belongs to the RSC7/SWP82 family. SWP82 subfamily. Component of the SWI/SNF global transcription activator complex composed of at least arp9, arp42, snf5, snf22, snf30, snf59, sol1, ssr1, ssr2, ssr3, ssr4 and tfg3.

The protein resides in the nucleus. In terms of biological role, component of the SWI/SNF complex, an ATP-dependent chromatin remodeling complex, which is required for the positive and negative regulation of gene expression of a large number of genes. It changes chromatin structure by altering DNA-histone contacts within a nucleosome, leading eventually to a change in nucleosome position, thus facilitating or repressing binding of gene-specific transcription factors. In Schizosaccharomyces pombe (strain 972 / ATCC 24843) (Fission yeast), this protein is SWI/SNF global transcription activator complex subunit snf59 (snf59).